The following is a 168-amino-acid chain: Large ribosomal subunit protein uL10 (168 aa).

It belongs to the universal ribosomal protein uL10 family. As to quaternary structure, part of the ribosomal stalk of the 50S ribosomal subunit. The N-terminus interacts with L11 and the large rRNA to form the base of the stalk. The C-terminus forms an elongated spine to which L12 dimers bind in a sequential fashion forming a multimeric L10(L12)X complex.

Its function is as follows. Forms part of the ribosomal stalk, playing a central role in the interaction of the ribosome with GTP-bound translation factors. This Laribacter hongkongensis (strain HLHK9) protein is Large ribosomal subunit protein uL10.